The sequence spans 387 residues: Beta-citrylglutamate synthase B (387 aa).

One can recognise an ATP-grasp domain in the interval 119–304; the sequence is FQELAGHGVP…VAGIIADYAA (186 aa). Residues K158, 193-203, and R219 each bind ATP; that span reads QKYIKESHGRD. Mg(2+) contacts are provided by D264, E277, and N279. Mn(2+)-binding residues include D264, E277, and N279. Residues 325-361 form a disordered region; it reads ASETSEPELGPPASAAVDNMSASSSSVDSDPESTTER. The segment covering 337-352 has biased composition (low complexity); the sequence is ASAAVDNMSASSSSVD.

The protein belongs to the RimK family. Mg(2+) serves as cofactor. Requires Mn(2+) as cofactor. As to expression, strongly expressed in brain and testis. Expressed in eyes, thymus, lung, kidney, skeletal muscle, spleen, skin and heart. Expressed in neurons of the neocortex, the gray matter and Purkinje cells.

It is found in the cytoplasm. The enzyme catalyses citrate + L-glutamate + ATP = beta-citrylglutamate + ADP + phosphate + H(+). It carries out the reaction N-acetyl-L-aspartate + L-glutamate + ATP = N-acetyl-L-aspartyl-L-glutamate + ADP + phosphate + H(+). Functionally, catalyzes the synthesis of beta-citryl-L-glutamate and N-acetyl-L-aspartyl-L-glutamate. Beta-citryl-L-glutamate is synthesized more efficiently than N-acetyl-L-aspartyl-L-glutamate. The polypeptide is Beta-citrylglutamate synthase B (Rimklb) (Mus musculus (Mouse)).